A 403-amino-acid polypeptide reads, in one-letter code: Octaketide synthase 1 (403 aa).

Residue Cys174 is part of the active site. Residues Ser281 and 318–321 each bind CoA; that span reads GGRA.

Belongs to the thiolase-like superfamily. Chalcone/stilbene synthases family. In terms of assembly, homodimer.

Its pathway is secondary metabolite biosynthesis; flavonoid biosynthesis. Its function is as follows. Catalyzes the iterative condensations of 8 molecules of malonyl-CoA to produce aromatic octaketides, SEK4 and SEK4b, the products of the minimal polyketide synthase for the benzoisochromanequinone actinorhodin. May be involved in the biosynthesis of the octaketide barbaloin. This is Octaketide synthase 1 from Aloe arborescens (Kidachi aloe).